We begin with the raw amino-acid sequence, 257 residues long: Probable pectate lyase E (257 aa).

Positions methionine 1 to alanine 17 are cleaved as a signal peptide.

This sequence belongs to the polysaccharide lyase 3 family. The cofactor is Ca(2+).

It localises to the secreted. It catalyses the reaction Eliminative cleavage of (1-&gt;4)-alpha-D-galacturonan to give oligosaccharides with 4-deoxy-alpha-D-galact-4-enuronosyl groups at their non-reducing ends.. Its function is as follows. Pectinolytic enzyme consist of four classes of enzymes: pectin lyase, polygalacturonase, pectin methylesterase and rhamnogalacturonase. Among pectinolytic enzymes, pectin lyase is the most important in depolymerization of pectin, since it cleaves internal glycosidic bonds of highly methylated pectins. Favors pectate, the anion, over pectin, the methyl ester. This chain is Probable pectate lyase E (plyE), found in Aspergillus flavus (strain ATCC 200026 / FGSC A1120 / IAM 13836 / NRRL 3357 / JCM 12722 / SRRC 167).